The primary structure comprises 116 residues: Non-specific lipid-transfer protein (116 aa).

The signal sequence occupies residues 1 to 25 (MASMVMNVLCVAVACMVFSASYADA). 4 disulfides stabilise this stretch: Cys28/Cys75, Cys38/Cys52, Cys53/Cys98, and Cys73/Cys112.

The protein belongs to the plant LTP family.

Plant non-specific lipid-transfer proteins transfer phospholipids as well as galactolipids across membranes. May play a role in wax or cutin deposition in the cell walls of expanding epidermal cells and certain secretory tissues. In Gerbera hybrida (Daisy), this protein is Non-specific lipid-transfer protein.